A 539-amino-acid polypeptide reads, in one-letter code: CTP synthase (539 aa).

The interval 1-269 (MSATKYIFVT…DERVLSKLKL (269 aa)) is amidoligase domain. A CTP-binding site is contributed by Ser15. Ser15 provides a ligand contact to UTP. 16-21 (SLGKGI) contacts ATP. Position 56 (Tyr56) interacts with L-glutamine. Asp73 is a binding site for ATP. Residues Asp73 and Glu143 each coordinate Mg(2+). CTP-binding positions include 150–152 (DIE), 190–195 (KTKPTQ), and Lys226. UTP contacts are provided by residues 190-195 (KTKPTQ) and Lys226. Positions 295–537 (NIALVGKYVE…VKAANDFAKG (243 aa)) constitute a Glutamine amidotransferase type-1 domain. Gly357 contributes to the L-glutamine binding site. Cys384 serves as the catalytic Nucleophile; for glutamine hydrolysis. L-glutamine-binding positions include 385–388 (LGMQ), Glu408, and Arg465. Residues His510 and Glu512 contribute to the active site.

This sequence belongs to the CTP synthase family. As to quaternary structure, homotetramer.

The catalysed reaction is UTP + L-glutamine + ATP + H2O = CTP + L-glutamate + ADP + phosphate + 2 H(+). It catalyses the reaction L-glutamine + H2O = L-glutamate + NH4(+). It carries out the reaction UTP + NH4(+) + ATP = CTP + ADP + phosphate + 2 H(+). It functions in the pathway pyrimidine metabolism; CTP biosynthesis via de novo pathway; CTP from UDP: step 2/2. Its activity is regulated as follows. Allosterically activated by GTP, when glutamine is the substrate; GTP has no effect on the reaction when ammonia is the substrate. The allosteric effector GTP functions by stabilizing the protein conformation that binds the tetrahedral intermediate(s) formed during glutamine hydrolysis. Inhibited by the product CTP, via allosteric rather than competitive inhibition. In terms of biological role, catalyzes the ATP-dependent amination of UTP to CTP with either L-glutamine or ammonia as the source of nitrogen. Regulates intracellular CTP levels through interactions with the four ribonucleotide triphosphates. This Cytophaga hutchinsonii (strain ATCC 33406 / DSM 1761 / CIP 103989 / NBRC 15051 / NCIMB 9469 / D465) protein is CTP synthase.